The sequence spans 76 residues: Exodeoxyribonuclease 7 small subunit (76 aa).

It belongs to the XseB family. As to quaternary structure, heterooligomer composed of large and small subunits.

It is found in the cytoplasm. The enzyme catalyses Exonucleolytic cleavage in either 5'- to 3'- or 3'- to 5'-direction to yield nucleoside 5'-phosphates.. Its function is as follows. Bidirectionally degrades single-stranded DNA into large acid-insoluble oligonucleotides, which are then degraded further into small acid-soluble oligonucleotides. The chain is Exodeoxyribonuclease 7 small subunit from Legionella pneumophila subsp. pneumophila (strain Philadelphia 1 / ATCC 33152 / DSM 7513).